A 255-amino-acid polypeptide reads, in one-letter code: Glutamate racemase (255 aa).

Residues 7–8 and 39–40 each bind substrate; these read DS and YG. Cys70 (proton donor/acceptor) is an active-site residue. 71 to 72 provides a ligand contact to substrate; it reads NT. Cys181 (proton donor/acceptor) is an active-site residue. Residue 182–183 coordinates substrate; that stretch reads TH.

Belongs to the aspartate/glutamate racemases family.

It carries out the reaction L-glutamate = D-glutamate. It participates in cell wall biogenesis; peptidoglycan biosynthesis. Its function is as follows. Provides the (R)-glutamate required for cell wall biosynthesis. The protein is Glutamate racemase of Helicobacter pylori (strain G27).